A 109-amino-acid polypeptide reads, in one-letter code: Large ribosomal subunit protein uL24 (109 aa).

This sequence belongs to the universal ribosomal protein uL24 family. Part of the 50S ribosomal subunit.

Its function is as follows. One of two assembly initiator proteins, it binds directly to the 5'-end of the 23S rRNA, where it nucleates assembly of the 50S subunit. Functionally, one of the proteins that surrounds the polypeptide exit tunnel on the outside of the subunit. This chain is Large ribosomal subunit protein uL24, found in Rickettsia massiliae (strain Mtu5).